Reading from the N-terminus, the 521-residue chain is Jacalin-related lectin 38 (521 aa).

An F-box domain is found at 2 to 48 (MQPDHDLPYDLEGEILSHLPIQILARFRCVCKRWNTLFKERRFFNSD). 3 Kelch repeats span residues 145–190 (KHYK…PYSV), 326–373 (YIYI…ITQH), and 486–521 (MSFV…SPLP). A Jacalin-type lectin domain is found at 377-519 (SRFAPLRGIQ…LTAFGVHFSP (143 aa)).

Belongs to the jacalin lectin family.

The chain is Jacalin-related lectin 38 (JAL38) from Arabidopsis thaliana (Mouse-ear cress).